The following is a 211-amino-acid chain: ATP-dependent Clp protease proteolytic subunit (211 aa).

Serine 106 serves as the catalytic Nucleophile. Residue histidine 131 is part of the active site.

The protein belongs to the peptidase S14 family. As to quaternary structure, fourteen ClpP subunits assemble into 2 heptameric rings which stack back to back to give a disk-like structure with a central cavity, resembling the structure of eukaryotic proteasomes.

The protein localises to the cytoplasm. The catalysed reaction is Hydrolysis of proteins to small peptides in the presence of ATP and magnesium. alpha-casein is the usual test substrate. In the absence of ATP, only oligopeptides shorter than five residues are hydrolyzed (such as succinyl-Leu-Tyr-|-NHMec, and Leu-Tyr-Leu-|-Tyr-Trp, in which cleavage of the -Tyr-|-Leu- and -Tyr-|-Trp bonds also occurs).. Functionally, cleaves peptides in various proteins in a process that requires ATP hydrolysis. Has a chymotrypsin-like activity. Plays a major role in the degradation of misfolded proteins. The protein is ATP-dependent Clp protease proteolytic subunit of Nitrobacter hamburgensis (strain DSM 10229 / NCIMB 13809 / X14).